Consider the following 743-residue polypeptide: Protein STB5 (743 aa).

The segment at residues 22 to 49 is a DNA-binding region (zn(2)-C6 fungal-type); it reads CARCRKLKKKCGKQIPTCANCDKNGAHC. Disordered stretches follow at residues 81-100 and 155-249; these read VGKS…PLSA and NSNP…YANN. Composition is skewed to polar residues over residues 85 to 99 and 155 to 198; these read PLST…SPLS and NSNP…SPLI. Residues 213–238 show a composition bias toward low complexity; the sequence is NNNRNTSNGDNGSNVNHDNNNGSTNT. The span at 239–249 shows a compositional bias: polar residues; the sequence is PQLSLTPYANN.

The protein resides in the nucleus. Binds to SIN3. The sequence is that of Protein STB5 (STB5) from Saccharomyces cerevisiae (strain ATCC 204508 / S288c) (Baker's yeast).